The primary structure comprises 340 residues: N-acetyl-gamma-glutamyl-phosphate reductase (340 aa).

Cysteine 146 is a catalytic residue.

It belongs to the NAGSA dehydrogenase family. Type 1 subfamily.

It is found in the cytoplasm. It catalyses the reaction N-acetyl-L-glutamate 5-semialdehyde + phosphate + NADP(+) = N-acetyl-L-glutamyl 5-phosphate + NADPH + H(+). It participates in amino-acid biosynthesis; L-arginine biosynthesis; N(2)-acetyl-L-ornithine from L-glutamate: step 3/4. Its function is as follows. Catalyzes the NADPH-dependent reduction of N-acetyl-5-glutamyl phosphate to yield N-acetyl-L-glutamate 5-semialdehyde. The sequence is that of N-acetyl-gamma-glutamyl-phosphate reductase from Streptococcus gordonii (strain Challis / ATCC 35105 / BCRC 15272 / CH1 / DL1 / V288).